Consider the following 617-residue polypeptide: Chaperone protein HscA homolog (617 aa).

It belongs to the heat shock protein 70 family.

In terms of biological role, probable chaperone. Has a low intrinsic ATPase activity which is markedly stimulated by HscB. This chain is Chaperone protein HscA homolog, found in Vibrio vulnificus (strain CMCP6).